Here is a 404-residue protein sequence, read N- to C-terminus: Nesprin-4 (404 aa).

2 disordered regions span residues 1 to 91 (MALS…GGKH) and 277 to 347 (GQRG…GAPD). The Cytoplasmic segment spans residues 1–355 (MALSLPLGPR…PDPASRQPLT (355 aa)). A compositionally biased stretch (polar residues) spans 39–52 (EESTSPEQAQTLGQ). Basic residues predominate over residues 307 to 320 (HQKRLARHQRHSLL). One can recognise a KASH domain in the interval 347 to 404 (DPASRQPLTFLLILFLLFLLLVGAMFLLPASGGPCCSHARIPRTPYLVLSYVNGLPPV). A helical; Anchor for type IV membrane protein membrane pass occupies residues 356-376 (FLLILFLLFLLLVGAMFLLPA). Residues 377–404 (SGGPCCSHARIPRTPYLVLSYVNGLPPV) are Perinuclear space-facing.

The protein belongs to the nesprin family. In terms of assembly, core component of LINC complexes which are composed of inner nuclear membrane SUN domain-containing proteins coupled to outer nuclear membrane KASH domain-containing nesprins. SUN and KASH domain-containing proteins seem to bind each other promiscuously; however, differentially expression of LINC complex constituents can give rise to specific assemblies. Probably part of a SUN1-containing LINC complex. Interacts with kinesins KIF5B and KLC1. The disulfid bond with SUN1 or SUN2 is required for stability of the respective LINC complex under tensile forces.

It is found in the nucleus outer membrane. Its function is as follows. As a component of the LINC (LInker of Nucleoskeleton and Cytoskeleton) complex, involved in the connection between the nuclear lamina and the cytoskeleton. The nucleocytoplasmic interactions established by the LINC complex play an important role in the transmission of mechanical forces across the nuclear envelope and in nuclear movement and positioning. Behaves as a kinesin cargo, providing a functional binding site for kinesin-1 at the nuclear envelope. Hence may contribute to the establishment of secretory epithelial morphology by promoting kinesin-dependent apical migration of the centrosome and Golgi apparatus and basal localization of the nucleus. The chain is Nesprin-4 (SYNE4) from Homo sapiens (Human).